The chain runs to 521 residues: Cytochrome P450 monooxygenase sdnF (521 aa).

Residues 19-39 traverse the membrane as a helical segment; it reads YLGLLLSGTVLYTVYKLIIAI. Residues Asn178, Asn186, Asn191, Asn309, and Asn416 are each glycosylated (N-linked (GlcNAc...) asparagine). Position 460 (Cys460) interacts with heme.

It belongs to the cytochrome P450 family. It depends on heme as a cofactor.

The protein resides in the membrane. It participates in antibiotic biosynthesis. Functionally, cytochrome P450 monooxygenase; part of the gene cluster that mediates the biosynthesis of sordarin and hypoxysordarin, glycoside antibiotics with a unique tetracyclic diterpene aglycone structure. First, the geranylgeranyl diphosphate synthase sdnC constructs GGDP from farnesyl diphosphate and isopentenyl diphosphate. The diterpene cyclase sdnA then catalyzes the cyclization of GGDP to afford cycloaraneosene. Cycloaraneosene is then hydroxylated four times by the putative cytochrome P450 monooxygenases sdnB, sdnE, sdnF and sdnH to give a hydroxylated cycloaraneosene derivative such as cycloaraneosene-8,9,13,19-tetraol. Although the order of the hydroxylations is unclear, at least C8, C9 and C13 of the cycloaraneosene skeleton are hydroxylated before the sordaricin formation. Dehydration of the 13-hydroxy group of the hydroxylated cycloaraneosene derivative might be catalyzed by an unassigned hypothetical protein such as sdnG and sdnP to construct the cyclopentadiene moiety. The FAD-dependent oxidoreductase sdnN is proposed to catalyze the oxidation at C9 of the hydroxylated cycloaraneosene derivative and also catalyze the Baeyer-Villiger oxidation to give the lactone intermediate. The presumed lactone intermediate would be hydrolyzed to give an acrolein moiety and a carboxylate moiety. Then, [4+2]cycloaddition would occur between the acrolein moiety and the cyclopentadiene moiety to give sordaricin. SdnN might also be involved in the [4+2]cycloaddition after the hypothesized oxidation to accommodate the oxidized product and prompt the [4+2]cycloaddition. GDP-6-deoxy-D-altrose may be biosynthesized from GDP-D-mannose by the putative GDP-mannose-4,6-dehydratase sdnI and the short-chain dehydrogenase sdnK. The glycosyltransferase sdnJ catalyzes the attachment of 6-deoxy-D-altrose onto the 19-hydroxy group of sordaricin to give 4'-O-demethylsordarin. The methyltransferase sdnD would complete the biosynthesis of sordarin. Sordarin can be further modified into hypoxysordarin. The unique acyl chain at the 3'-hydroxy group of hypoxysordarin would be constructed by an iterative type I PKS sdnO and the trans-acting polyketide methyltransferase sdnL. SdnL would be responsible for the introduction of an alpha-methyl group of the polyketide chain. Alternatively, the beta-lactamase-like protein sdnR might be responsible for the cleavage and transfer of the polyketide chain from the PKS sdnO to sordarin. Two putative cytochrome P450 monooxygenases, sdnQ and sdnT, might catalyze the epoxidations of the polyketide chain to complete the biosynthesis of hypoxysordarin. Transcriptional regulators sdnM and sdnS are presumably encoded for the transcriptional regulation of the expression of the sdn gene cluster. The chain is Cytochrome P450 monooxygenase sdnF from Sordaria araneosa (Pleurage araneosa).